The following is a 196-amino-acid chain: Proteasome subunit beta 1 (196 aa).

The propeptide at 1–6 (MEELPA) is removed in mature form; by autocatalysis. The Nucleophile role is filled by T7.

It belongs to the peptidase T1B family. In terms of assembly, the 20S proteasome core is composed of 14 alpha and 14 beta subunits that assemble into four stacked heptameric rings, resulting in a barrel-shaped structure. The two inner rings, each composed of seven catalytic beta subunits, are sandwiched by two outer rings, each composed of seven alpha subunits. The catalytic chamber with the active sites is on the inside of the barrel. Has a gated structure, the ends of the cylinder being occluded by the N-termini of the alpha-subunits. Is capped at one or both ends by the proteasome regulatory ATPase, PAN.

The protein localises to the cytoplasm. The catalysed reaction is Cleavage of peptide bonds with very broad specificity.. Its activity is regulated as follows. The formation of the proteasomal ATPase PAN-20S proteasome complex, via the docking of the C-termini of PAN into the intersubunit pockets in the alpha-rings, triggers opening of the gate for substrate entry. Interconversion between the open-gate and close-gate conformations leads to a dynamic regulation of the 20S proteasome proteolysis activity. In terms of biological role, component of the proteasome core, a large protease complex with broad specificity involved in protein degradation. The chain is Proteasome subunit beta 1 from Saccharolobus islandicus (strain Y.N.15.51 / Yellowstone #2) (Sulfolobus islandicus).